A 178-amino-acid polypeptide reads, in one-letter code: Interleukin-10 (178 aa).

An N-terminal signal peptide occupies residues 1–18 (MPGSALLCCLLLLAGVKT). A glycan (N-linked (GlcNAc...) asparagine) is linked at Asn-29. 2 disulfide bridges follow: Cys-30–Cys-126 and Cys-80–Cys-132. A glycan (N-linked (GlcNAc...) asparagine) is linked at Asn-134.

Belongs to the IL-10 family. In terms of assembly, homodimer. Interacts with IL10RA and IL10RB.

Its subcellular location is the secreted. Its function is as follows. Major immune regulatory cytokine that acts on many cells of the immune system where it has profound anti-inflammatory functions, limiting excessive tissue disruption caused by inflammation. Mechanistically, IL10 binds to its heterotetrameric receptor comprising IL10RA and IL10RB leading to JAK1 and STAT2-mediated phosphorylation of STAT3. In turn, STAT3 translocates to the nucleus where it drives expression of anti-inflammatory mediators. Targets antigen-presenting cells (APCs) such as macrophages and monocytes and inhibits their release of pro-inflammatory cytokines including granulocyte-macrophage colony-stimulating factor /GM-CSF, granulocyte colony-stimulating factor/G-CSF, IL-1 alpha, IL-1 beta, IL-6, IL-8 and TNF-alpha. Also interferes with antigen presentation by reducing the expression of MHC-class II and co-stimulatory molecules, thereby inhibiting their ability to induce T cell activation. In addition, controls the inflammatory response of macrophages by reprogramming essential metabolic pathways including mTOR signaling. The sequence is that of Interleukin-10 (Il10) from Rattus norvegicus (Rat).